Here is a 307-residue protein sequence, read N- to C-terminus: Delta-9 acyl-lipid desaturase 2 (307 aa).

Residues 1-17 (MSVTSTVEENHQKNPST) show a composition bias toward polar residues. The disordered stretch occupies residues 1–21 (MSVTSTVEENHQKNPSTPAAV). Residues 53 to 73 (LALLAPFYFTWSALWVTFLFY) form a helical membrane-spanning segment. Residues His85 and His90 each coordinate Fe cation. Residues 85–90 (HRNLAH) carry the Histidine box-1 motif. A helical transmembrane segment spans residues 99-119 (LEYLLAYCALLAIQGDPIDWV). Residues His122, His125, and His126 each coordinate Fe cation. A Histidine box-2 motif is present at residues 122–126 (HRYHH). 2 helical membrane-spanning segments follow: residues 182 to 202 (VLFH…MSFV) and 204 to 224 (WGMG…NSLC). 4 residues coordinate Fe cation: His225, His254, His257, and His258. Positions 254–258 (HNNHH) match the Histidine box-3 motif.

It belongs to the fatty acid desaturase type 1 family. Fe cation is required as a cofactor. As to expression, strongly expressed in flowers, roots, leaves, seedpods, and inflorescence meristems.

Its subcellular location is the endoplasmic reticulum membrane. The catalysed reaction is a 1-hexacosanoyl-2-acyl-phosphoglycerolipid + 2 Fe(II)-[cytochrome b5] + O2 + 2 H(+) = a 1-[(17Z)-hexacos-17-enoyl]-2-acyl-phosphoglycerolipid + 2 Fe(III)-[cytochrome b5] + 2 H2O. It catalyses the reaction a 1-tetracosanoyl-2-acyl-phosphoglycerolipid + 2 Fe(II)-[cytochrome b5] + O2 + 2 H(+) = a 1-[(15Z)-tetracos-15-enoyl]-2-acyl-phosphoglycerolipid + 2 Fe(III)-[cytochrome b5] + 2 H2O. It functions in the pathway lipid metabolism; polyunsaturated fatty acid biosynthesis. Involved in delta-9 desaturation of fatty acids. Plays a role in the production of very-long-chain monounsaturated fatty acids (VLCMUFAs) in seed lipids and in membrane phospholipids and sphingolipids. Acts as C-16:0 desaturase for monogalactosyl diacylglycerol (MGDG) and phosphatidylglycerol (PG). Is an essential component for cold adaptation. Is essential to adjust the acyl composition of organelle membrane lipid composition in response to cold stress. The chain is Delta-9 acyl-lipid desaturase 2 from Arabidopsis thaliana (Mouse-ear cress).